Reading from the N-terminus, the 455-residue chain is Catalase-like protein (455 aa).

The interval 1–25 (MSQQDKKLTGVFGHPVSDRENSMTA) is disordered.

This sequence belongs to the catalase family.

Catalytically inactive. This chain is Catalase-like protein (katB), found in Staphylococcus aureus.